We begin with the raw amino-acid sequence, 115 residues long: Salivary anti-complement protein (115 aa).

The first 22 residues, 1-22 (MKFFYLIFSAIFFLADPALVKC), serve as a signal peptide directing secretion. Cystine bridges form between cysteine 26-cysteine 108, cysteine 41-cysteine 92, and cysteine 83-cysteine 101.

May form multimers. Salivary gland (at protein level).

The protein localises to the secreted. Salivary protein that inhibits the classical pathway of complement system activation in the host while having no inhibitory effect on the alternative or lectin pathways. Prevent cleavage of host C4 and consequently impairs the activation of factors downstream of C4b in the complement cascade. The protein is Salivary anti-complement protein of Lutzomyia longipalpis (Sand fly).